Consider the following 619-residue polypeptide: Nucleolar GTP-binding protein 2 (619 aa).

Basic and acidic residues predominate over residues 1-10 (MGTGKKEKSR). Residues 1-24 (MGTGKKEKSRIQRQGKVTGDPKVK) are disordered. Residues 222–383 (WNELYKVIDS…LIDCPGIVPP (162 aa)) enclose the CP-type G domain. Residues 332–339 (GYPNVGKS) and 376–380 (DCPGI) contribute to the GTP site. Positions 473–619 (PWFTPAPEKE…PPKKQRRSRK (147 aa)) are disordered. Residues 489-500 (MEGREGRYGEMS) show a composition bias toward basic and acidic residues. The segment covering 536-546 (SDSDSEVEEAA) has biased composition (acidic residues). Residues 547 to 556 (EEKGEEKSTA) show a composition bias toward basic and acidic residues. Acidic residues predominate over residues 565-603 (SSDEEEDGEEEGSDVEDDEEGSDLDIEGASELEESESEA).

It belongs to the TRAFAC class YlqF/YawG GTPase family. NOG2 subfamily.

The protein localises to the nucleus. Its subcellular location is the nucleolus. Its function is as follows. GTPase that associates with pre-60S ribosomal subunits in the nucleolus and is required for their nuclear export and maturation. This chain is Nucleolar GTP-binding protein 2 (nog-2), found in Neurospora crassa (strain ATCC 24698 / 74-OR23-1A / CBS 708.71 / DSM 1257 / FGSC 987).